The following is a 316-amino-acid chain: uncharacterized protein (316 aa).

Residues S1–Y70 lie on the Cytoplasmic side of the membrane. Residues I71–L91 form a helical membrane-spanning segment. A topological domain (lumenal) is located at residue H92. Residues F93–L113 form a helical membrane-spanning segment. The Cytoplasmic segment spans residues N114 to K170. Residues Y171–L191 form a helical membrane-spanning segment. Over Y192–D194 the chain is Lumenal. The helical transmembrane segment at V195 to V215 threads the bilayer. At Y216–N245 the chain is on the cytoplasmic side. Residues A246–G266 form a helical membrane-spanning segment. Residues N267–I316 are Lumenal-facing.

The protein belongs to the UPF0742 family.

It localises to the endoplasmic reticulum. It is found in the membrane. This is an uncharacterized protein from Schizosaccharomyces pombe (strain 972 / ATCC 24843) (Fission yeast).